Consider the following 744-residue polypeptide: Vesicle-fusing ATPase (744 aa).

Lys-105 carries the post-translational modification N6-acetyllysine. Ser-207 carries the phosphoserine modification. The residue at position 259 (Tyr-259) is a Phosphotyrosine. Residues 505–510 (NGIIKW) and 545–552 (PHSGKTAL) contribute to the ATP site. A Mg(2+)-binding site is contributed by Thr-550. The residue at position 569 (Ser-569) is a Phosphoserine; by CDK16.

Belongs to the AAA ATPase family. Homohexamer. Interacts with GABARAP and GABARAPL2. Interacts with GRIA2. Interacts with PLK2, leading to disrupt the interaction with GRIA2. Interacts with MUSK; may regulate MUSK endocytosis and activity. Interacts with CDK16. Mg(2+) is required as a cofactor. Post-translationally, phosphorylation at Ser-569 interferes with homohexamerization.

It is found in the cytoplasm. It carries out the reaction ATP + H2O = ADP + phosphate + H(+). In terms of biological role, required for vesicle-mediated transport. Catalyzes the fusion of transport vesicles within the Golgi cisternae. Is also required for transport from the endoplasmic reticulum to the Golgi stack. Seems to function as a fusion protein required for the delivery of cargo proteins to all compartments of the Golgi stack GRIA2 leads to influence GRIA2 membrane cycling. This is Vesicle-fusing ATPase (Nsf) from Mus musculus (Mouse).